We begin with the raw amino-acid sequence, 329 residues long: Isopenicillin N synthase (329 aa).

Isopenicillin N contacts are provided by arginine 87, tyrosine 91, and tyrosine 189. The N-[(5S)-5-amino-5-carboxypentanoyl]-L-cysteinyl-D-valine site is built by arginine 87, tyrosine 91, tyrosine 189, histidine 212, and aspartate 214. One can recognise a Fe2OG dioxygenase domain in the interval 180-286 (TLSAVTLIHY…RLSLPFFLHA (107 aa)). Fe(2+) is bound by residues histidine 212, aspartate 214, and histidine 268. 2-oxoglutarate is bound at residue arginine 277. An isopenicillin N-binding site is contributed by serine 279. Serine 279 lines the N-[(5S)-5-amino-5-carboxypentanoyl]-L-cysteinyl-D-valine pocket.

The protein belongs to the iron/ascorbate-dependent oxidoreductase family. Fe cation is required as a cofactor. The cofactor is L-ascorbate.

It catalyses the reaction N-[(5S)-5-amino-5-carboxypentanoyl]-L-cysteinyl-D-valine + O2 = isopenicillin N + 2 H2O. The protein operates within antibiotic biosynthesis; penicillin G biosynthesis; penicillin G from L-alpha-aminoadipate and L-cysteine and L-valine: step 2/3. In terms of biological role, removes, in the presence of oxygen, 4 hydrogen atoms from delta-L-(alpha-aminoadipyl)-L-cysteinyl-D-valine (ACV) to form the azetidinone and thiazolidine rings of isopenicillin. The protein is Isopenicillin N synthase (pcbC) of Streptomyces griseus.